The following is a 191-amino-acid chain: Fe/S biogenesis protein NfuA (191 aa).

[4Fe-4S] cluster contacts are provided by Cys149 and Cys152.

Belongs to the NfuA family. As to quaternary structure, homodimer. [4Fe-4S] cluster is required as a cofactor.

In terms of biological role, involved in iron-sulfur cluster biogenesis. Binds a 4Fe-4S cluster, can transfer this cluster to apoproteins, and thereby intervenes in the maturation of Fe/S proteins. Could also act as a scaffold/chaperone for damaged Fe/S proteins. This Salmonella paratyphi A (strain ATCC 9150 / SARB42) protein is Fe/S biogenesis protein NfuA.